The primary structure comprises 327 residues: Phenylalanine--tRNA ligase alpha subunit (327 aa).

Position 252 (E252) interacts with Mg(2+).

This sequence belongs to the class-II aminoacyl-tRNA synthetase family. Phe-tRNA synthetase alpha subunit type 1 subfamily. Tetramer of two alpha and two beta subunits. Mg(2+) serves as cofactor.

The protein resides in the cytoplasm. It catalyses the reaction tRNA(Phe) + L-phenylalanine + ATP = L-phenylalanyl-tRNA(Phe) + AMP + diphosphate + H(+). The chain is Phenylalanine--tRNA ligase alpha subunit from Escherichia coli O139:H28 (strain E24377A / ETEC).